Reading from the N-terminus, the 671-residue chain is Kinesin-like protein KIF2C (671 aa).

A globular region spans residues 1–200 (MIDIDDVAAI…CNPLTVTDPI (200 aa)). A disordered region spans residues 37 to 58 (QKRKSVNSKIPGPKEGLRSRST). Phosphoserine; by AURKB is present on Ser41. The Microtubule tip localization signal signature appears at 44–47 (SKIP). Residues Ser55, Ser57, Ser61, Ser112, Ser121, Ser133, and Ser138 each carry the phosphoserine modification. Residues 115-138 (AEEQAHSTRSTSSANPGNSVRRKS) form a disordered region. Polar residues predominate over residues 121–132 (STRSTSSANPGN). The segment at 153-184 (EKRAQNSEIRIKRAQEYDNSFPNWEFARMIKE) is negative regulator of microtubule-binding. One can recognise a Kinesin motor domain in the interval 204-534 (RICVCVRKRP…LRYADRVKEL (331 aa)). Residues Arg210 and 294-301 (GQTGSGKT) each bind ATP. Ser465 is modified (phosphoserine). The disordered stretch occupies residues 533 to 568 (ELSPHSGPSGEQAVQMETEEMDASSHGASLTGNEEE). The stretch at 566–601 (EEEELSSQMSSFNEAMTQIRELEERAMEELREIIQQ) forms a coiled coil. Ser576 is modified (phosphoserine).

It belongs to the TRAFAC class myosin-kinesin ATPase superfamily. Kinesin family. MCAK/KIF2 subfamily. In terms of assembly, interacts with CENPH. Interacts with MTUS2/TIP150; the interaction is direct. Interacts with MAPRE1; the interaction is direct, regulated by phosphorylation and is probably required for targeting to growing microtubule plus ends. Interacts with KIF18B at microtubule tips; this interaction increases the affinity of both partners for microtubule plus ends and is required for robust microtubule depolymerization. Phosphorylation by AURKA or AURKB strongly reduces KIF18B-binding. In terms of processing, phosphorylation by AURKB, regulates association with centromeres and kinetochores and the microtubule depolymerization activity. Post-translationally, ubiquitinated. In terms of tissue distribution, testis. Localized to the meiotically active cells of the seminiferous epithelia in the testis.

The protein resides in the cytoplasm. Its subcellular location is the cytoskeleton. The protein localises to the nucleus. It localises to the chromosome. It is found in the centromere. The protein resides in the kinetochore. Its function is as follows. In complex with KIF18B, constitutes the major microtubule plus-end depolymerizing activity in mitotic cells. Regulates the turnover of microtubules at the kinetochore and functions in chromosome segregation during mitosis. Plays a role in chromosome congression and is required for the lateral to end-on conversion of the chromosome-microtubule attachment. The protein is Kinesin-like protein KIF2C (Kif2c) of Rattus norvegicus (Rat).